The chain runs to 215 residues: Ribonuclease T (215 aa).

Residues 20-194 (VVIDVETAGF…YDTLQTAKLF (175 aa)) enclose the Exonuclease domain. D23, E25, H181, and D186 together coordinate Mg(2+). H181 serves as the catalytic Proton donor/acceptor.

The protein belongs to the RNase T family. Homodimer. The cofactor is Mg(2+).

Trims short 3' overhangs of a variety of RNA species, leaving a one or two nucleotide 3' overhang. Responsible for the end-turnover of tRNA: specifically removes the terminal AMP residue from uncharged tRNA (tRNA-C-C-A). Also appears to be involved in tRNA biosynthesis. In Yersinia pseudotuberculosis serotype I (strain IP32953), this protein is Ribonuclease T.